Consider the following 207-residue polypeptide: Recombination protein RecR (207 aa).

A C4-type zinc finger spans residues 62 to 77; that stretch reads CSRCNTFTEQDVCETC. One can recognise a Toprim domain in the interval 85 to 184; that stretch reads SVLCVVETPA…KVSRLARGVP (100 aa).

Belongs to the RecR family.

In terms of biological role, may play a role in DNA repair. It seems to be involved in an RecBC-independent recombinational process of DNA repair. It may act with RecF and RecO. The sequence is that of Recombination protein RecR from Ralstonia nicotianae (strain ATCC BAA-1114 / GMI1000) (Ralstonia solanacearum).